Reading from the N-terminus, the 477-residue chain is Aspartyl/glutamyl-tRNA(Asn/Gln) amidotransferase subunit B (477 aa).

It belongs to the GatB/GatE family. GatB subfamily. In terms of assembly, heterotrimer of A, B and C subunits.

The enzyme catalyses L-glutamyl-tRNA(Gln) + L-glutamine + ATP + H2O = L-glutaminyl-tRNA(Gln) + L-glutamate + ADP + phosphate + H(+). It carries out the reaction L-aspartyl-tRNA(Asn) + L-glutamine + ATP + H2O = L-asparaginyl-tRNA(Asn) + L-glutamate + ADP + phosphate + 2 H(+). Functionally, allows the formation of correctly charged Asn-tRNA(Asn) or Gln-tRNA(Gln) through the transamidation of misacylated Asp-tRNA(Asn) or Glu-tRNA(Gln) in organisms which lack either or both of asparaginyl-tRNA or glutaminyl-tRNA synthetases. The reaction takes place in the presence of glutamine and ATP through an activated phospho-Asp-tRNA(Asn) or phospho-Glu-tRNA(Gln). The chain is Aspartyl/glutamyl-tRNA(Asn/Gln) amidotransferase subunit B from Lactococcus lactis subsp. cremoris (strain SK11).